The primary structure comprises 256 residues: 5-oxoprolinase subunit A (256 aa).

This sequence belongs to the LamB/PxpA family. In terms of assembly, forms a complex composed of PxpA, PxpB and PxpC.

It carries out the reaction 5-oxo-L-proline + ATP + 2 H2O = L-glutamate + ADP + phosphate + H(+). Its function is as follows. Catalyzes the cleavage of 5-oxoproline to form L-glutamate coupled to the hydrolysis of ATP to ADP and inorganic phosphate. The protein is 5-oxoprolinase subunit A of Geobacillus kaustophilus (strain HTA426).